Reading from the N-terminus, the 698-residue chain is Polyribonucleotide nucleotidyltransferase (698 aa).

Mg(2+) contacts are provided by Asp490 and Asp496. Positions 558–617 (PVIYTMRIPQDKIGALIGPGGKNIKRITETTDTKIDINDDGVVQIAAVNGDKLAMAKAEI) constitute a KH domain. The S1 motif domain maps to 627–695 (NKIYKGKVVS…NNGKVRLSRK (69 aa)).

The protein belongs to the polyribonucleotide nucleotidyltransferase family. Requires Mg(2+) as cofactor.

The protein resides in the cytoplasm. It carries out the reaction RNA(n+1) + phosphate = RNA(n) + a ribonucleoside 5'-diphosphate. Involved in mRNA degradation. Catalyzes the phosphorolysis of single-stranded polyribonucleotides processively in the 3'- to 5'-direction. This is Polyribonucleotide nucleotidyltransferase from Elusimicrobium minutum (strain Pei191).